Here is a 189-residue protein sequence, read N- to C-terminus: Capsid protein (189 aa).

An N-acetylmethionine; by host modification is found at M1.

Belongs to the tymoviruses capsid protein family.

It localises to the virion. Self-assembles to form a T=3 icosahedral capsid composed of 180 copies of the capsid protein. The capsid encapsulates the single-stranded RNA genome. A pentameric unit may be lost during decapsidation. The protein is Capsid protein of Brassica (Chinese cabbage).